We begin with the raw amino-acid sequence, 258 residues long: Bidirectional sugar transporter SWEET7 (258 aa).

Residues 1 to 11 are Extracellular-facing; sequence MVFAHLNLLRK. Residues 12-32 form a helical membrane-spanning segment; it reads IVGIIGNFIALCLFLSPTPTF. The MtN3/slv 1 domain occupies 12-100; it reads IVGIIGNFIA…IFFVYCGRQK (89 aa). Over 33-46 the chain is Cytoplasmic; sequence VRIVKKKSVEEYSP. The helical transmembrane segment at 47-67 threads the bilayer; that stretch reads IPYLATLINCLVWVLYGLPTV. At 68–73 the chain is on the extracellular side; it reads HPDSTL. A helical transmembrane segment spans residues 74–94; the sequence is VITINGTGILIEIVFLTIFFV. The Cytoplasmic segment spans residues 95-102; the sequence is YCGRQKQR. Residues 103–123 traverse the membrane as a helical segment; the sequence is LIISAVIAAETAFIAILAVLV. At 124–134 the chain is on the extracellular side; the sequence is LTLQHTTEKRT. A helical transmembrane segment spans residues 135–155; it reads MSVGIVCCVFNVMMYASPLSV. In terms of domain architecture, MtN3/slv 2 spans 136-221; the sequence is SVGIVCCVFN…LYGAYYKSTK (86 aa). At 156 to 166 the chain is on the cytoplasmic side; it reads MKMVIKTKSVE. The chain crosses the membrane as a helical span at residues 167-187; the sequence is FMPFWLSVAGFLNAGVWTIYA. The Extracellular segment spans residues 188–193; sequence LMPFDP. A helical transmembrane segment spans residues 194 to 214; the sequence is FMAIPNGIGCLFGLAQLILYG. Residues 215-258 are Cytoplasmic-facing; the sequence is AYYKSTKRIMAERENQPGYVGLSSAIARTGSEKTANTNQEPNNV.

The protein belongs to the SWEET sugar transporter family. Forms heterooligomers with SWEET8, SWEET11, SWEET13, SWEET16 and SWEET17.

Its subcellular location is the cell membrane. In terms of biological role, mediates both low-affinity uptake and efflux of sugar across the plasma membrane. The polypeptide is Bidirectional sugar transporter SWEET7 (Arabidopsis thaliana (Mouse-ear cress)).